We begin with the raw amino-acid sequence, 175 residues long: tRNA (cytidine(56)-2'-O)-methyltransferase (175 aa).

L83 contributes to the S-adenosyl-L-methionine binding site.

Belongs to the aTrm56 family. Homodimer.

It localises to the cytoplasm. It catalyses the reaction cytidine(56) in tRNA + S-adenosyl-L-methionine = 2'-O-methylcytidine(56) in tRNA + S-adenosyl-L-homocysteine + H(+). Specifically catalyzes the AdoMet-dependent 2'-O-ribose methylation of cytidine at position 56 in tRNAs. This Methanosphaera stadtmanae (strain ATCC 43021 / DSM 3091 / JCM 11832 / MCB-3) protein is tRNA (cytidine(56)-2'-O)-methyltransferase.